Consider the following 485-residue polypeptide: Adenosylhomocysteinase (485 aa).

Residues threonine 60, aspartate 146, and glutamate 208 each contribute to the substrate site. Position 209 to 211 (209 to 211) interacts with NAD(+); the sequence is TTT. Residues lysine 238 and aspartate 242 each contribute to the substrate site. NAD(+) contacts are provided by residues asparagine 243, 272–277, glutamate 295, asparagine 330, 351–353, and asparagine 399; these read GYGDVG and IGH.

It belongs to the adenosylhomocysteinase family. NAD(+) serves as cofactor.

Its subcellular location is the cytoplasm. The enzyme catalyses S-adenosyl-L-homocysteine + H2O = L-homocysteine + adenosine. Its pathway is amino-acid biosynthesis; L-homocysteine biosynthesis; L-homocysteine from S-adenosyl-L-homocysteine: step 1/1. May play a key role in the regulation of the intracellular concentration of adenosylhomocysteine. In Streptomyces griseus subsp. griseus (strain JCM 4626 / CBS 651.72 / NBRC 13350 / KCC S-0626 / ISP 5235), this protein is Adenosylhomocysteinase.